A 174-amino-acid polypeptide reads, in one-letter code: Large ribosomal subunit protein uL10 (174 aa).

Belongs to the universal ribosomal protein uL10 family. As to quaternary structure, part of the ribosomal stalk of the 50S ribosomal subunit. The N-terminus interacts with L11 and the large rRNA to form the base of the stalk. The C-terminus forms an elongated spine to which L12 dimers bind in a sequential fashion forming a multimeric L10(L12)X complex.

In terms of biological role, forms part of the ribosomal stalk, playing a central role in the interaction of the ribosome with GTP-bound translation factors. In Desulfovibrio desulfuricans (strain ATCC 27774 / DSM 6949 / MB), this protein is Large ribosomal subunit protein uL10.